A 379-amino-acid chain; its full sequence is DNA replication and repair protein RecF (379 aa).

30–37 (GKNAQGKT) contributes to the ATP binding site.

Belongs to the RecF family.

The protein localises to the cytoplasm. The RecF protein is involved in DNA metabolism; it is required for DNA replication and normal SOS inducibility. RecF binds preferentially to single-stranded, linear DNA. It also seems to bind ATP. The polypeptide is DNA replication and repair protein RecF (Ligilactobacillus salivarius (strain UCC118) (Lactobacillus salivarius)).